The following is an 805-amino-acid chain: Polycystin-2-like protein 1 (805 aa).

A disordered region spans residues 1–59 (MNAVGSPEGQELQKLGSGAWDNPAYSGPPSPHGTLRVCTISSTGPLQPQPKKPEDEPQE). The Cytoplasmic portion of the chain corresponds to 1–103 (MNAVGSPEGQ…ELYIKTTLRE (103 aa)). A lipid anchor (S-palmitoyl cysteine) is attached at Cys38. The helical transmembrane segment at 104-124 (LLVYIVFLVDICLLTYGMTSS) threads the bilayer. The Extracellular segment spans residues 125 to 356 (SAYYYTKVMS…NWDFFIVGCE (232 aa)). 2 N-linked (GlcNAc...) asparagine glycosylation sites follow: Asn177 and Asn207. The cysteines at positions 210 and 223 are disulfide-linked. Residue Asn241 is glycosylated (N-linked (GlcNAc...) asparagine). The chain crosses the membrane as a helical span at residues 357–376 (VIFCVFIFYYVVEEILELHI). Residues Glu370 and Glu373 each contribute to the Ca(2+) site. Residues 377 to 384 (HRLRYLSS) lie on the Cytoplasmic side of the membrane. The helical transmembrane segment at 385 to 405 (IWNILDLVVILLSIVAVGFHI) threads the bilayer. Ca(2+) contacts are provided by Asn387 and Asp390. At 406-433 (FRTLEVNRLMGKLLQQPNTYADFEFLAF) the chain is on the extracellular side. Residues 434–454 (WQTQYNNMNAVNLFFAWIKIF) form a helical membrane-spanning segment. Over 455–479 (KYISFNKTMTQLSSTLARCAKDILG) the chain is Cytoplasmic. A helical membrane pass occupies residues 480–499 (FAVMFFIVFFAYAQLGYLLF). At 500–511 (GTQVENFSTFIK) the chain is on the extracellular side. The N-linked (GlcNAc...) asparagine glycan is linked to Asn505. The segment at residues 512–526 (CIFTQFRIILGDFDY) is an intramembrane region (pore-forming). Over 527–536 (NAIDNANRIL) the chain is Extracellular. The helical transmembrane segment at 537–557 (GPAYFVTYVFFVFFVLLNMFL) threads the bilayer. Residues 558–805 (AIINDTYSEV…RGEIPTLQRS (248 aa)) lie on the Cytoplasmic side of the membrane. Positions 633–668 (HEITELTATFTKFDRDGNRILDEKEQEKMRQDLEEE) constitute an EF-hand domain. Coiled-coil stretches lie at residues 650-686 (NRIL…IVSS) and 700-740 (GWVS…MLER). The interval 704 to 763 (GEEFYMLTRRVLQLETVLEGVVSQIDAVGSKLKMLERKGWLAPSPGVKEQAIWKHPQPAP) is required for homooligomerization. Residues 759 to 805 (PQPAPAVTPDPWGVQGGQESEVPYKREEEALEERRLSRGEIPTLQRS) form a disordered region. The span at 780–796 (VPYKREEEALEERRLSR) shows a compositional bias: basic and acidic residues.

This sequence belongs to the polycystin family. As to quaternary structure, oligomer. Functional PKD2L1 homotetramer can be formed either through C-terminal trimerization followed by N-terminal dimerization of a fourth subunit with a subunit in the trimer or through dimerization followed by trimerization. Heterotetramer with either PKD1L1, PKD1L3 or PKD1; the heterotetrameric complex contains three PKD1L2 chains plus one chain from another family member. Interacts with PKD1L1, forming a ciliary calcium channel. Interacts with PKD1L3, forming a cation channel that is activated by low extracellular pH. Interacts with PKD1; this heteromeric functional cation channels is opened by hypo-osmotic stimulation. Interacts with RACK1; inhibits the channel activity possibly by impairing localization to the cell membrane. Palmitoylation is important for expression at the cell membrane and for channel activity. Detected in taste bud cells in fungiform papillae (at protein level). Ubiquitous. Expressed in adult heart, skeletal muscle, brain, spleen, testis, retina and liver. Isoform 4 appears to be expressed only in transformed lymphoblasts.

The protein localises to the cell projection. It is found in the cilium membrane. The protein resides in the cell membrane. Its subcellular location is the cytoplasmic vesicle. It catalyses the reaction Ca(2+)(in) = Ca(2+)(out). The catalysed reaction is Na(+)(in) = Na(+)(out). It carries out the reaction K(+)(in) = K(+)(out). The enzyme catalyses Mg(2+)(in) = Mg(2+)(out). With respect to regulation, the non-selective cation channel is gated following an off-response property by acid: gated open after the removal of acid stimulus, but not during acid application. Channel activity is inhibited by phosphatidylinositol-4,5-bisphosphate (PIP2). Non-selective cation channel activity is substantially increased when either the extracellular or intracellular calcium-ion concentration is raised. Regulation of non-selective cation channel activity by external calcium is bimodal, first sensitizing and subsequently inactivating the current. Functionally, homotetrameric, non-selective cation channel that is permeable to sodium, potassium, magnesium and calcium. Also forms functionnal heteromeric channels with PKD1, PKD1L1 and PKD1L3. Pore-forming subunit of a heterotetrameric, non-selective cation channel, formed by PKD1L2 and PKD1L3, that is permeable to sodium, potassium, magnesium and calcium and which may act as a sour taste receptor in gustatory cells; however, its contribution to sour taste perception is unclear in vivo and may be indirect. The homomeric and heteromeric channels formed by PKD1L2 and PKD1L3 are activated by low pH and Ca(2+), but opens only when the extracellular pH rises again and after the removal of acid stimulus. Pore-forming subunit of a calcium-permeant ion channel formed by PKD1L2 and PKD1L1 in primary cilia, where it controls cilium calcium concentration, without affecting cytoplasmic calcium concentration, and regulates sonic hedgehog/SHH signaling and GLI2 transcription. The PKD1L1:PKD2L1 complex channel is mechanosensitive only at high pressures and is highly temperature sensitive. Pore-forming subunit of a calcium-permeant ion channel formed by PKD1L2 and PKD1 that produces a transient increase in intracellular calcium concentration upon hypo-osmotic stimulation (200 mOsm). May play a role in the perception of carbonation taste. May play a role in the sensory perception of water, via a mechanism that activates the channel in response to dilution of salivary bicarbonate and changes in salivary pH. This chain is Polycystin-2-like protein 1, found in Homo sapiens (Human).